We begin with the raw amino-acid sequence, 476 residues long: MNFTSTIGLEVHFELKTKSKIFSPSPVTYGAKPNTETNVIDWGYPGTLPMVNKEVYRLGLMVALATHSHVNPVTHFDRKNYFYPDNPKAYQITQFFKPLAENGYVEVEVHGKKKKIHIHEMHIEEDAGKNTHGTNGFSYVDYNRQGVPLLEVVSEPEMTDPDEAVAYLEKLREIVQFTGASDVKMEEGSMRIDTNISIRPAGQKELGTKVEMKNLNSFEHVRMSLAYEQKRQQEILLSGGRVRLSTRRFDTNTGKTVLERVKEGDADYRYFPEPDLPPYHIKQEWVDEIAANLPKTADERRKIYVDEYGLKPYDANVLLQNKESSDFFDATVAAGADPQQAANWMNTQVNGYLNEKHAELKDIALTPENLAAMIKLISDGTISSKIAKKVFAETVANGTDPKKYVEENGMAQLSDESVLAPMVKEVVDANPQSVEDYKNGKDRAIGFLVGQIMKQTRGKANPKVINKLLLADLASR.

This sequence belongs to the GatB/GatE family. GatB subfamily. In terms of assembly, heterotrimer of A, B and C subunits.

It carries out the reaction L-glutamyl-tRNA(Gln) + L-glutamine + ATP + H2O = L-glutaminyl-tRNA(Gln) + L-glutamate + ADP + phosphate + H(+). It catalyses the reaction L-aspartyl-tRNA(Asn) + L-glutamine + ATP + H2O = L-asparaginyl-tRNA(Asn) + L-glutamate + ADP + phosphate + 2 H(+). Functionally, allows the formation of correctly charged Asn-tRNA(Asn) or Gln-tRNA(Gln) through the transamidation of misacylated Asp-tRNA(Asn) or Glu-tRNA(Gln) in organisms which lack either or both of asparaginyl-tRNA or glutaminyl-tRNA synthetases. The reaction takes place in the presence of glutamine and ATP through an activated phospho-Asp-tRNA(Asn) or phospho-Glu-tRNA(Gln). This is Aspartyl/glutamyl-tRNA(Asn/Gln) amidotransferase subunit B from Lactobacillus delbrueckii subsp. bulgaricus (strain ATCC 11842 / DSM 20081 / BCRC 10696 / JCM 1002 / NBRC 13953 / NCIMB 11778 / NCTC 12712 / WDCM 00102 / Lb 14).